A 164-amino-acid polypeptide reads, in one-letter code: Polygalacturonase (164 aa).

It belongs to the glycosyl hydrolase 28 family.

The protein localises to the secreted. It localises to the cell wall. It carries out the reaction (1,4-alpha-D-galacturonosyl)n+m + H2O = (1,4-alpha-D-galacturonosyl)n + (1,4-alpha-D-galacturonosyl)m.. This is Polygalacturonase from Cupressus sempervirens (Italian cypress).